A 211-amino-acid chain; its full sequence is N-(5'-phosphoribosyl)anthranilate isomerase (211 aa).

It belongs to the TrpF family.

The catalysed reaction is N-(5-phospho-beta-D-ribosyl)anthranilate = 1-(2-carboxyphenylamino)-1-deoxy-D-ribulose 5-phosphate. It functions in the pathway amino-acid biosynthesis; L-tryptophan biosynthesis; L-tryptophan from chorismate: step 3/5. The sequence is that of N-(5'-phosphoribosyl)anthranilate isomerase from Desulfovibrio desulfuricans (strain ATCC 27774 / DSM 6949 / MB).